Consider the following 230-residue polypeptide: 5'-methylthioadenosine/S-adenosylhomocysteine nucleosidase (230 aa).

Glutamate 12 functions as the Proton acceptor in the catalytic mechanism. Substrate is bound by residues glycine 78, isoleucine 153, and 174 to 175 (ME). Residue aspartate 198 is the Proton donor of the active site.

The protein belongs to the PNP/UDP phosphorylase family. MtnN subfamily.

The catalysed reaction is S-adenosyl-L-homocysteine + H2O = S-(5-deoxy-D-ribos-5-yl)-L-homocysteine + adenine. The enzyme catalyses S-methyl-5'-thioadenosine + H2O = 5-(methylsulfanyl)-D-ribose + adenine. It catalyses the reaction 5'-deoxyadenosine + H2O = 5-deoxy-D-ribose + adenine. It functions in the pathway amino-acid biosynthesis; L-methionine biosynthesis via salvage pathway; S-methyl-5-thio-alpha-D-ribose 1-phosphate from S-methyl-5'-thioadenosine (hydrolase route): step 1/2. In terms of biological role, catalyzes the irreversible cleavage of the glycosidic bond in both 5'-methylthioadenosine (MTA) and S-adenosylhomocysteine (SAH/AdoHcy) to adenine and the corresponding thioribose, 5'-methylthioribose and S-ribosylhomocysteine, respectively. Also cleaves 5'-deoxyadenosine, a toxic by-product of radical S-adenosylmethionine (SAM) enzymes, into 5-deoxyribose and adenine. This is 5'-methylthioadenosine/S-adenosylhomocysteine nucleosidase from Shewanella loihica (strain ATCC BAA-1088 / PV-4).